A 239-amino-acid chain; its full sequence is Endonuclease V (239 aa).

2 residues coordinate Mg(2+): Asp-50 and Asp-118.

The protein belongs to the endonuclease V family. Mg(2+) serves as cofactor.

The protein localises to the cytoplasm. The enzyme catalyses Endonucleolytic cleavage at apurinic or apyrimidinic sites to products with a 5'-phosphate.. Its function is as follows. DNA repair enzyme involved in the repair of deaminated bases. Selectively cleaves double-stranded DNA at the second phosphodiester bond 3' to a deoxyinosine leaving behind the intact lesion on the nicked DNA. This is Endonuclease V from Xylella fastidiosa (strain Temecula1 / ATCC 700964).